The following is a 380-amino-acid chain: 3-isopropylmalate dehydratase large subunit (380 aa).

Residues Cys-262, Cys-320, and Cys-323 each coordinate [4Fe-4S] cluster.

Belongs to the aconitase/IPM isomerase family. LeuC type 2 subfamily. As to quaternary structure, heterodimer of LeuC and LeuD. Requires [4Fe-4S] cluster as cofactor.

The enzyme catalyses (2R,3S)-3-isopropylmalate = (2S)-2-isopropylmalate. It functions in the pathway amino-acid biosynthesis; L-leucine biosynthesis; L-leucine from 3-methyl-2-oxobutanoate: step 2/4. Its function is as follows. Catalyzes the isomerization between 2-isopropylmalate and 3-isopropylmalate, via the formation of 2-isopropylmaleate. The sequence is that of 3-isopropylmalate dehydratase large subunit from Pyrococcus horikoshii (strain ATCC 700860 / DSM 12428 / JCM 9974 / NBRC 100139 / OT-3).